A 236-amino-acid chain; its full sequence is 7-cyano-7-deazaguanine synthase (236 aa).

Residue 7-17 (CSGGLDSVSLA) participates in ATP binding. The Zn(2+) site is built by Cys-185, Cys-193, Cys-196, and Cys-199.

It belongs to the QueC family. Zn(2+) serves as cofactor.

The enzyme catalyses 7-carboxy-7-deazaguanine + NH4(+) + ATP = 7-cyano-7-deazaguanine + ADP + phosphate + H2O + H(+). Its pathway is purine metabolism; 7-cyano-7-deazaguanine biosynthesis. Catalyzes the ATP-dependent conversion of 7-carboxy-7-deazaguanine (CDG) to 7-cyano-7-deazaguanine (preQ(0)). In Sinorhizobium fredii (strain NBRC 101917 / NGR234), this protein is 7-cyano-7-deazaguanine synthase.